The chain runs to 120 residues: NAD(P)H-quinone oxidoreductase subunit 3, chloroplastic (120 aa).

A run of 3 helical transmembrane segments spans residues 9 to 29 (IFWA…IISG), 64 to 84 (MFAL…PWAV), and 88 to 108 (VLGV…VVGS).

The protein belongs to the complex I subunit 3 family. In terms of assembly, NDH is composed of at least 16 different subunits, 5 of which are encoded in the nucleus.

It is found in the plastid. The protein localises to the chloroplast thylakoid membrane. The enzyme catalyses a plastoquinone + NADH + (n+1) H(+)(in) = a plastoquinol + NAD(+) + n H(+)(out). It catalyses the reaction a plastoquinone + NADPH + (n+1) H(+)(in) = a plastoquinol + NADP(+) + n H(+)(out). NDH shuttles electrons from NAD(P)H:plastoquinone, via FMN and iron-sulfur (Fe-S) centers, to quinones in the photosynthetic chain and possibly in a chloroplast respiratory chain. The immediate electron acceptor for the enzyme in this species is believed to be plastoquinone. Couples the redox reaction to proton translocation, and thus conserves the redox energy in a proton gradient. The protein is NAD(P)H-quinone oxidoreductase subunit 3, chloroplastic of Nuphar advena (Common spatterdock).